A 1019-amino-acid chain; its full sequence is DNA topoisomerase 1 (1019 aa).

The disordered stretch occupies residues 1–160 (MNSIQVKNEP…KTMSITGSGE (160 aa)). The span at 46 to 56 (KPLAKRPKVED) shows a compositional bias: basic and acidic residues. The segment covering 62–78 (PLTSTVSSQNGVQKRSG) has biased composition (polar residues). 2 stretches are compositionally biased toward acidic residues: residues 83–93 (DDNDDDSDSDS) and 107–136 (SDDDEDDDDDDDEGDDDDEEDDDDDDDDDD). Interaction with DNA regions lie at residues 379 to 380 (KY), 442 to 447 (RAGNEK), and 556 to 558 (SAK). Residues 386–860 (TSNFKTNSDR…KKVKKEEEEN (475 aa)) form the Topo IB-type catalytic domain. The tract at residues 716–737 (EQKGLTGDDGTPKKGKKAKNVE) is disordered. Y822 acts as the O-(3'-phospho-DNA)-tyrosine intermediate in catalysis. Disordered stretches follow at residues 843 to 890 (GQGK…TGDS) and 940 to 1019 (MRKL…AAVV). Residues 854-863 (KKEEEENDIK) are compositionally biased toward basic and acidic residues. A compositionally biased stretch (basic residues) spans 864–879 (PKKKDAKGAASKKRAA). Composition is skewed to basic and acidic residues over residues 940–950 (MRKLDSAERKG) and 980–996 (TSADRKMSKPIKAVDKT). A compositionally biased stretch (acidic residues) spans 997–1012 (EESDDDLSSDSSDDED).

It belongs to the type IB topoisomerase family. Monomer.

It catalyses the reaction ATP-independent breakage of single-stranded DNA, followed by passage and rejoining.. Its function is as follows. Releases the supercoiling and torsional tension of DNA introduced during the DNA replication and transcription by transiently cleaving and rejoining one strand of the DNA duplex. Introduces a single-strand break via transesterification at a target site in duplex DNA. The scissile phosphodiester is attacked by the catalytic tyrosine of the enzyme, resulting in the formation of a DNA-(3'-phosphotyrosyl)-enzyme intermediate and the expulsion of a 5'-OH DNA strand. The free DNA strand then rotates around the intact phosphodiester bond on the opposing strand, thus removing DNA supercoils. Finally, in the religation step, the DNA 5'-OH attacks the covalent intermediate to expel the active-site tyrosine and restore the DNA phosphodiester backbone. The chain is DNA topoisomerase 1 (TOP1) from Mycosarcoma maydis (Corn smut fungus).